The primary structure comprises 466 residues: Putative multidrug resistance protein MdtD (466 aa).

Transmembrane regions (helical) follow at residues 11-31 (LWIV…VNTA), 48-68 (SVIV…GWLA), 71-91 (IGVK…SLLC), 105-125 (VIQG…VMKI), 137-157 (FVTL…GFLV), 164-184 (WIFL…WFLM), 194-214 (FDIS…LALD), 218-238 (SLGI…IALL), 262-282 (FSIG…LPFM), 286-306 (FLQL…VPMV), 328-347 (VLIV…ALVA), 351-370 (WIWM…AIRF), 403-423 (LGVS…MAAG), and 429-449 (MVFI…ALIF).

This sequence belongs to the major facilitator superfamily. TCR/Tet family.

Its subcellular location is the cell inner membrane. This chain is Putative multidrug resistance protein MdtD, found in Pectobacterium carotovorum subsp. carotovorum (strain PC1).